A 626-amino-acid polypeptide reads, in one-letter code: Kinesin-like protein Klp59C (626 aa).

Positions 1–183 are globular; it reads MDKLSIEQKI…VRSGTTNERI (183 aa). The interval 68–155 is disordered; sequence CSGGNAASAN…GKNEDPGNPN (88 aa). The segment covering 72 to 96 has biased composition (polar residues); the sequence is NAASANQTASISPRSMKQRIATGSL. Positions 101–112 are enriched in low complexity; it reads ATAPPRQQTAPP. Basic and acidic residues predominate over residues 113–150; that stretch reads VREDEVVHQAERMRKERERRREAQARTRLDREQGKNED. Residues 115–150 are a coiled coil; the sequence is EDEVVHQAERMRKERERRREAQARTRLDREQGKNED. The Kinesin motor domain occupies 187 to 521; it reads QIMVCVRKRP…LRYADRVKEL (335 aa). 277–284 serves as a coordination point for ATP; the sequence is GQTGSGKT. The interval 557 to 608 is disordered; sequence ASSTSMPGGGNQAQQHTNTANDLNRSQKPTSKPTYPTSGQQLVQRKGSSQRE.

The protein belongs to the TRAFAC class myosin-kinesin ATPase superfamily. Kinesin family. MCAK/KIF2 subfamily.

The protein resides in the chromosome. It is found in the centromere. Its subcellular location is the kinetochore. The protein localises to the cytoplasm. It localises to the cytoskeleton. The protein resides in the spindle pole. Its function is as follows. Required during anaphase to drive sister chromatid separation to actively depolymerize kinetochore microtubules at their kinetochore-associated plus ends, thereby contributing to chromatid mobility through a 'Pac-man' mechanism. The polypeptide is Kinesin-like protein Klp59C (Klp59C) (Drosophila melanogaster (Fruit fly)).